The sequence spans 217 residues: Small ribosomal subunit protein eS6 (217 aa).

The protein belongs to the eukaryotic ribosomal protein eS6 family.

This Hyperthermus butylicus (strain DSM 5456 / JCM 9403 / PLM1-5) protein is Small ribosomal subunit protein eS6.